The primary structure comprises 373 residues: DNA replication and repair protein RecF (373 aa).

30-37 (GDNAQGKT) lines the ATP pocket.

The protein belongs to the RecF family.

It is found in the cytoplasm. Its function is as follows. The RecF protein is involved in DNA metabolism; it is required for DNA replication and normal SOS inducibility. RecF binds preferentially to single-stranded, linear DNA. It also seems to bind ATP. This Oenococcus oeni (strain ATCC BAA-331 / PSU-1) protein is DNA replication and repair protein RecF.